Reading from the N-terminus, the 278-residue chain is PILR alpha-associated neural protein (278 aa).

The N-terminal stretch at 1–27 is a signal peptide; that stretch reads MWSAQLLSQLLPLWPLLLLSVLPPAQG. Residues 25–93 form a disordered region; it reads AQGSSHRSPP…PSGFEEGPPS (69 aa). At 28-174 the chain is on the extracellular side; that stretch reads SSHRSPPAPA…FGGRGEGVDP (147 aa). O-linked (GalNAc...) threonine glycosylation occurs at Thr-136. A helical membrane pass occupies residues 175 to 195; the sequence is QLYVTITISIIIVLVATGIIF. The Cytoplasmic segment spans residues 196–278; that stretch reads KFCWDRSQKR…QLNRIPLVNL (83 aa). Residues 206 to 278 form a disordered region; that stretch reads RRPSGQQGAL…QLNRIPLVNL (73 aa). Positions 209–225 are enriched in polar residues; sequence SGQQGALRQEESQQPLT.

Post-translationally, O-glycosylation at Thr-136 is essential for recognition by PILRA. In terms of tissue distribution, mainly expressed in brain and spinal cord. Weak expression also detected in heart, kidney, spleen and lymph node. Virtually no expression detected in liver and embryo relative to brain.

It is found in the membrane. In terms of biological role, acts as a ligand for PILRA in neuronal tissues, where it may be involved in immune regulation. In Mus musculus (Mouse), this protein is PILR alpha-associated neural protein (Pianp).